We begin with the raw amino-acid sequence, 83 residues long: Small ribosomal subunit protein bS16 (83 aa).

Belongs to the bacterial ribosomal protein bS16 family.

This is Small ribosomal subunit protein bS16 from Syntrophus aciditrophicus (strain SB).